Here is a 407-residue protein sequence, read N- to C-terminus: Uronyl 2-sulfotransferase (407 aa).

The segment at 1–20 is disordered; that stretch reads MKKKQQQHPGGGTDPWPHGA. Topologically, residues 1–49 are cytoplasmic; that stretch reads MKKKQQQHPGGGTDPWPHGAPVGGAPPCLGSCKRRIPLLPFLRFSLRDY. A helical; Signal-anchor for type II membrane protein membrane pass occupies residues 50–70; that stretch reads GFCMATLLVFCLGSLFYQLSG. The Lumenal segment spans residues 71–407; sequence GPPRFLLDLR…EKWLEDIYKR (337 aa). 3 N-linked (GlcNAc...) asparagine glycosylation sites follow: N85, N141, and N156. H169 is a catalytic residue. N174 and N320 each carry an N-linked (GlcNAc...) asparagine glycan. The segment covering 386 to 400 has biased composition (acidic residues); it reads TEEPIDDEEQDDEKW. The interval 386–407 is disordered; that stretch reads TEEPIDDEEQDDEKWLEDIYKR.

This sequence belongs to the sulfotransferase 3 family.

The protein resides in the golgi apparatus membrane. Its function is as follows. Sulfotransferase that catalyzes the transfer of sulfate to the position 2 of uronyl residues in glycosaminoglycan chains. Has mainly activity toward iduronyl residues in dermatan sulfate, and weaker activity toward glucuronyl residues of chondroitin sulfate. Has no activity toward desulfated N-resulfated heparin. The polypeptide is Uronyl 2-sulfotransferase (Mus musculus (Mouse)).